The sequence spans 177 residues: Coatomer subunit zeta-1 (177 aa).

Position 1 is an N-acetylmethionine (Met1).

Belongs to the adaptor complexes small subunit family. Oligomeric complex that consists of at least the alpha, beta, beta', gamma, delta, epsilon and zeta subunits.

It localises to the cytoplasm. It is found in the golgi apparatus membrane. The protein resides in the cytoplasmic vesicle. The protein localises to the COPI-coated vesicle membrane. Its function is as follows. The coatomer is a cytosolic protein complex that binds to dilysine motifs and reversibly associates with Golgi non-clathrin-coated vesicles, which further mediate biosynthetic protein transport from the ER, via the Golgi up to the trans Golgi network. Coatomer complex is required for budding from Golgi membranes, and is essential for the retrograde Golgi-to-ER transport of dilysine-tagged proteins. The zeta subunit may be involved in regulating the coat assembly and, hence, the rate of biosynthetic protein transport due to its association-dissociation properties with the coatomer complex. This is Coatomer subunit zeta-1 (COPZ1) from Bos taurus (Bovine).